Here is a 533-residue protein sequence, read N- to C-terminus: Probable RNA-binding protein 46 (533 aa).

RRM domains lie at 61-139, 141-223, and 236-308; these read CEVF…VSLD, CRLF…WADP, and KVLY…LAKP. Residues 338 to 362 form a disordered region; that stretch reads ESHSKSLGKPPTLPTRLNGQHSPSP.

Interacts with YTHDC2, MEIOC, MOV10, CNOT6L, DDX4, UPF1 and PABPC1. Expressed in the testis and ovary (at protein level). Expressed in spermatogonia and spermatocytes in testis (at protein level).

It localises to the cytoplasm. Functionally, essential for male and female fertility, playing a crucial role in regulating germ cell development by ensuring the proper progression of meiosis prophase I. Regulates mitotic-to-meiotic transition in spermatogenesis by forming a complex with MEIOC and YTHDC2 which recognizes and down-regulates mitotic transcripts for a successful meiotic entry. Required for normal synaptonemal complex formation during meiosis, binding meiotic cohesin subunit mRNAs containing GCCUAU/GUUCGA motifs in their 3'UTRs regions and positively regulating their translation. Required for spermatogonial differentiation in both developing and adult testis. The polypeptide is Probable RNA-binding protein 46 (Mus musculus (Mouse)).